The chain runs to 1025 residues: Multidrug resistance protein MdtC (1025 aa).

The next 12 helical transmembrane spans lie at 16 to 36 (LLTLAIALAGILGFRLLPVAP), 333 to 353 (EVEQSLMIAVALVILVVFVFL), 360 to 380 (LIPAVAVPVSLIGTFAAMYLC), 387 to 407 (LSLMALTIATGFVVDDAIVVL), 431 to 451 (VGFTVLSMSLSLIAVFLPLLM), 459 to 479 (FFAEFSITLSVAILISLFVSV), 528 to 548 (WVLLLLLGTVALTVWLFISIP), 853 to 873 (LWLMLAAIAAVYIVLGILYES), 875 to 895 (VHPLTILSTLPSAGVGALLAL), 897 to 917 (LFDTPFSLIALIGILLLIGIV), 953 to 973 (PILMTTLAALFGALPLVLTSG), and 984 to 1004 (ITIAGGLIMSQLLTLYTTPVV).

The protein belongs to the resistance-nodulation-cell division (RND) (TC 2.A.6) family. MdtC subfamily. In terms of assembly, part of a tripartite efflux system composed of MdtA, MdtB and MdtC. MdtC forms a heteromultimer with MdtB.

Its subcellular location is the cell inner membrane. The sequence is that of Multidrug resistance protein MdtC from Pantoea ananatis (strain AJ13355).